We begin with the raw amino-acid sequence, 404 residues long: Phosphopentomutase (404 aa).

Positions 10, 303, 308, 344, 345, and 356 each coordinate Mn(2+).

The protein belongs to the phosphopentomutase family. It depends on Mn(2+) as a cofactor.

It localises to the cytoplasm. It carries out the reaction 2-deoxy-alpha-D-ribose 1-phosphate = 2-deoxy-D-ribose 5-phosphate. It catalyses the reaction alpha-D-ribose 1-phosphate = D-ribose 5-phosphate. It functions in the pathway carbohydrate degradation; 2-deoxy-D-ribose 1-phosphate degradation; D-glyceraldehyde 3-phosphate and acetaldehyde from 2-deoxy-alpha-D-ribose 1-phosphate: step 1/2. Its function is as follows. Isomerase that catalyzes the conversion of deoxy-ribose 1-phosphate (dRib-1-P) and ribose 1-phosphate (Rib-1-P) to deoxy-ribose 5-phosphate (dRib-5-P) and ribose 5-phosphate (Rib-5-P), respectively. In Shewanella sp. (strain MR-4), this protein is Phosphopentomutase.